The sequence spans 344 residues: L-rhamnose-proton symporter (344 aa).

10 helical membrane-spanning segments follow: residues 4 to 24 (AITM…CFYA), 38 to 58 (WSVG…ALLL), 68 to 88 (FNLS…IGNI), 101 to 121 (MGIG…TPII), 137 to 157 (TLLG…AGQL), 175 to 195 (LLLA…MNAA), 214 to 234 (LPSY…FCFI), 259 to 279 (ILLS…YAWG), 290 to 310 (MSWM…GLVL), and 321 to 341 (VAVL…VGLG).

It belongs to the L-rhamnose transporter (TC 2.A.7.6) family.

Its subcellular location is the cell inner membrane. It catalyses the reaction L-rhamnopyranose(in) + H(+)(in) = L-rhamnopyranose(out) + H(+)(out). Uptake of L-rhamnose across the cytoplasmic membrane with the concomitant transport of protons into the cell (symport system). This Salmonella agona (strain SL483) protein is L-rhamnose-proton symporter.